We begin with the raw amino-acid sequence, 452 residues long: Bifunctional protein GlmU (452 aa).

Residues 1 to 226 (MNFSAVILAA…PIEVEGVNDR (226 aa)) form a pyrophosphorylase region. UDP-N-acetyl-alpha-D-glucosamine is bound by residues 8-11 (LAAG), Lys22, Gln73, 78-79 (GT), 100-102 (YGD), Gly137, Glu151, Asn166, and Asn224. Residue Asp102 coordinates Mg(2+). Asn224 is a binding site for Mg(2+). Residues 227 to 247 (AQLARLERAYQAAQAQKLLEQ) form a linker region. The interval 248–452 (GVMLRDPSRF…IANWQRPTKK (205 aa)) is N-acetyltransferase. Positions 330 and 348 each coordinate UDP-N-acetyl-alpha-D-glucosamine. The active-site Proton acceptor is His360. Residues Tyr363 and Asn374 each coordinate UDP-N-acetyl-alpha-D-glucosamine. Acetyl-CoA is bound by residues Ala377, 383–384 (NY), Ser402, Ala420, and Arg437.

The protein in the N-terminal section; belongs to the N-acetylglucosamine-1-phosphate uridyltransferase family. It in the C-terminal section; belongs to the transferase hexapeptide repeat family. Homotrimer. The cofactor is Mg(2+).

It is found in the cytoplasm. It carries out the reaction alpha-D-glucosamine 1-phosphate + acetyl-CoA = N-acetyl-alpha-D-glucosamine 1-phosphate + CoA + H(+). The catalysed reaction is N-acetyl-alpha-D-glucosamine 1-phosphate + UTP + H(+) = UDP-N-acetyl-alpha-D-glucosamine + diphosphate. The protein operates within nucleotide-sugar biosynthesis; UDP-N-acetyl-alpha-D-glucosamine biosynthesis; N-acetyl-alpha-D-glucosamine 1-phosphate from alpha-D-glucosamine 6-phosphate (route II): step 2/2. Its pathway is nucleotide-sugar biosynthesis; UDP-N-acetyl-alpha-D-glucosamine biosynthesis; UDP-N-acetyl-alpha-D-glucosamine from N-acetyl-alpha-D-glucosamine 1-phosphate: step 1/1. It participates in bacterial outer membrane biogenesis; LPS lipid A biosynthesis. Catalyzes the last two sequential reactions in the de novo biosynthetic pathway for UDP-N-acetylglucosamine (UDP-GlcNAc). The C-terminal domain catalyzes the transfer of acetyl group from acetyl coenzyme A to glucosamine-1-phosphate (GlcN-1-P) to produce N-acetylglucosamine-1-phosphate (GlcNAc-1-P), which is converted into UDP-GlcNAc by the transfer of uridine 5-monophosphate (from uridine 5-triphosphate), a reaction catalyzed by the N-terminal domain. The protein is Bifunctional protein GlmU of Aliivibrio fischeri (strain MJ11) (Vibrio fischeri).